Reading from the N-terminus, the 295-residue chain is NAD kinase (295 aa).

D74 functions as the Proton acceptor in the catalytic mechanism. NAD(+)-binding positions include 74 to 75 (DG), 148 to 149 (NE), R176, D178, and 189 to 194 (TAYAMS).

This sequence belongs to the NAD kinase family. The cofactor is a divalent metal cation.

It localises to the cytoplasm. It catalyses the reaction NAD(+) + ATP = ADP + NADP(+) + H(+). Its function is as follows. Involved in the regulation of the intracellular balance of NAD and NADP, and is a key enzyme in the biosynthesis of NADP. Catalyzes specifically the phosphorylation on 2'-hydroxyl of the adenosine moiety of NAD to yield NADP. The sequence is that of NAD kinase from Acidithiobacillus ferrooxidans (strain ATCC 23270 / DSM 14882 / CIP 104768 / NCIMB 8455) (Ferrobacillus ferrooxidans (strain ATCC 23270)).